Here is a 217-residue protein sequence, read N- to C-terminus: 5'-methylthioadenosine/S-adenosylhomocysteine nucleosidase (217 aa).

The active-site Proton acceptor is the Glu11. Residues Gly77, Val139, and Met159–Asp160 each bind substrate. Asp183 acts as the Proton donor in catalysis.

The protein belongs to the PNP/UDP phosphorylase family. MtnN subfamily.

The enzyme catalyses S-adenosyl-L-homocysteine + H2O = S-(5-deoxy-D-ribos-5-yl)-L-homocysteine + adenine. It carries out the reaction S-methyl-5'-thioadenosine + H2O = 5-(methylsulfanyl)-D-ribose + adenine. The catalysed reaction is 5'-deoxyadenosine + H2O = 5-deoxy-D-ribose + adenine. The protein operates within amino-acid biosynthesis; L-methionine biosynthesis via salvage pathway; S-methyl-5-thio-alpha-D-ribose 1-phosphate from S-methyl-5'-thioadenosine (hydrolase route): step 1/2. Its function is as follows. Catalyzes the irreversible cleavage of the glycosidic bond in both 5'-methylthioadenosine (MTA) and S-adenosylhomocysteine (SAH/AdoHcy) to adenine and the corresponding thioribose, 5'-methylthioribose and S-ribosylhomocysteine, respectively. Also cleaves 5'-deoxyadenosine, a toxic by-product of radical S-adenosylmethionine (SAM) enzymes, into 5-deoxyribose and adenine. The polypeptide is 5'-methylthioadenosine/S-adenosylhomocysteine nucleosidase (mtnN) (Thermotoga maritima (strain ATCC 43589 / DSM 3109 / JCM 10099 / NBRC 100826 / MSB8)).